The sequence spans 399 residues: Elongation factor Tu (399 aa).

One can recognise a tr-type G domain in the interval 10 to 204 (KPHVNIGTIG…AVDASIPEPE (195 aa)). Residues 19 to 26 (GHVDHGKT) are G1. 19–26 (GHVDHGKT) is a GTP binding site. Threonine 26 is a Mg(2+) binding site. The segment at 60–64 (GITIN) is G2. The G3 stretch occupies residues 81–84 (DCPG). Residues 81 to 85 (DCPGH) and 136 to 139 (NKCD) each bind GTP. Residues 136–139 (NKCD) form a G4 region. The tract at residues 174 to 176 (SGL) is G5.

Belongs to the TRAFAC class translation factor GTPase superfamily. Classic translation factor GTPase family. EF-Tu/EF-1A subfamily. As to quaternary structure, monomer.

The protein localises to the cytoplasm. It catalyses the reaction GTP + H2O = GDP + phosphate + H(+). Functionally, GTP hydrolase that promotes the GTP-dependent binding of aminoacyl-tRNA to the A-site of ribosomes during protein biosynthesis. The polypeptide is Elongation factor Tu (Prochlorococcus marinus (strain MIT 9515)).